A 299-amino-acid polypeptide reads, in one-letter code: Ribosomal RNA small subunit methyltransferase H (299 aa).

Residues 36–38 (GGH), Asp55, Asp103, and Gln110 contribute to the S-adenosyl-L-methionine site. Basic and acidic residues-rich tracts occupy residues 268–282 (KPVR…ENPR) and 289–299 (RAAERIEKGGD). The tract at residues 268-299 (KPVRPSEEEIRENPRARSGRLRAAERIEKGGD) is disordered.

The protein belongs to the methyltransferase superfamily. RsmH family.

The protein resides in the cytoplasm. It catalyses the reaction cytidine(1402) in 16S rRNA + S-adenosyl-L-methionine = N(4)-methylcytidine(1402) in 16S rRNA + S-adenosyl-L-homocysteine + H(+). Functionally, specifically methylates the N4 position of cytidine in position 1402 (C1402) of 16S rRNA. The sequence is that of Ribosomal RNA small subunit methyltransferase H from Thermotoga sp. (strain RQ2).